Consider the following 449-residue polypeptide: tRNA-2-methylthio-N(6)-dimethylallyladenosine synthase (449 aa).

Residues 7–124 (DAFYIHTFGC…LPLLIKQVQQ (118 aa)) enclose the MTTase N-terminal domain. 6 residues coordinate [4Fe-4S] cluster: Cys16, Cys52, Cys87, Cys163, Cys167, and Cys170. Positions 149-379 (RSSSMSAFVP…IECQNRISAS (231 aa)) constitute a Radical SAM core domain. The region spanning 382 to 445 (SQAVGSVVEV…SATLLGEPLI (64 aa)) is the TRAM domain.

This sequence belongs to the methylthiotransferase family. MiaB subfamily. Monomer. The cofactor is [4Fe-4S] cluster.

It localises to the cytoplasm. The catalysed reaction is N(6)-dimethylallyladenosine(37) in tRNA + (sulfur carrier)-SH + AH2 + 2 S-adenosyl-L-methionine = 2-methylsulfanyl-N(6)-dimethylallyladenosine(37) in tRNA + (sulfur carrier)-H + 5'-deoxyadenosine + L-methionine + A + S-adenosyl-L-homocysteine + 2 H(+). Functionally, catalyzes the methylthiolation of N6-(dimethylallyl)adenosine (i(6)A), leading to the formation of 2-methylthio-N6-(dimethylallyl)adenosine (ms(2)i(6)A) at position 37 in tRNAs that read codons beginning with uridine. The sequence is that of tRNA-2-methylthio-N(6)-dimethylallyladenosine synthase from Chlorobium chlorochromatii (strain CaD3).